The sequence spans 240 residues: Uridylate kinase (240 aa).

Residue 13 to 16 participates in ATP binding; it reads KASG. Residues 21–26 form an involved in allosteric activation by GTP region; sequence GGQGFG. Residue Gly55 coordinates UMP. Gly56 and Arg60 together coordinate ATP. Residues Asp75 and 136-143 contribute to the UMP site; that span reads TGNPFFTT. Residues Thr163, Gln164, Tyr169, and Asp172 each contribute to the ATP site.

It belongs to the UMP kinase family. As to quaternary structure, homohexamer.

The protein localises to the cytoplasm. The catalysed reaction is UMP + ATP = UDP + ADP. The protein operates within pyrimidine metabolism; CTP biosynthesis via de novo pathway; UDP from UMP (UMPK route): step 1/1. With respect to regulation, allosterically activated by GTP. Inhibited by UTP. Catalyzes the reversible phosphorylation of UMP to UDP. The sequence is that of Uridylate kinase from Rhizobium johnstonii (strain DSM 114642 / LMG 32736 / 3841) (Rhizobium leguminosarum bv. viciae).